The primary structure comprises 475 residues: MSKEIKAQVVVLGAGPAGYSAAFRCADLGLDTVIIERYNTLGGVCLNVGCIPSKALLHVAKVIEEAKALTEHGIVFGEPKTDIDKVRLWKEKVINQLTGGLAGMAKMRKVNVVNGYGKFTGPNTIEVDGEEGKTVVTFDNAIVAAGSRPIKLPFIPHEDPRIWDSTDALELKEVPGKLLIMGGGIIGLEMATVYHSLGSKIDVVEMFDQLIPAADKDMVKVYTKRIKDKFNLMLETKVTAVEAKEDGIYVSMEGKSAPAQAERYDAVLVAIGRVPNGKLLDAEKAGLEVDERGFIRVDKQMRTNVPHIFAIGDIVGQPMLAHKGVHEGHVAAEVISGKKHYFDPKVIPSIAYTEPEVAWVGKTEKEAKAEGINYEVATFPWAASGRAIASDCADGMTKLIFDKETHRVIGGAIVGTNGGELLGEIGLAIEMGCDAEDIALTIHAHPTLHESVGLAAEVFEGTITDLPNAKAKKKK.

FAD-binding positions include 36-45, Lys54, and Gly117; that span reads ERYNTLGGVC. A disulfide bridge links Cys45 with Cys50. NAD(+)-binding positions include 182 to 186, Glu205, Val238, and 270 to 273; these read GGGII and AIGR. FAD is bound by residues Asp313 and Ala321. The active-site Proton acceptor is His445.

Belongs to the class-I pyridine nucleotide-disulfide oxidoreductase family. FAD is required as a cofactor.

The protein localises to the cytoplasm. It carries out the reaction N(6)-[(R)-dihydrolipoyl]-L-lysyl-[protein] + NAD(+) = N(6)-[(R)-lipoyl]-L-lysyl-[protein] + NADH + H(+). Functionally, the branched-chain alpha-keto dehydrogenase complex catalyzes the overall conversion of alpha-keto acids to acyl-CoA and CO(2). It contains multiple copies of 3 enzymatic components: branched-chain alpha-keto acid decarboxylase (E1), lipoamide acyltransferase (E2) and lipoamide dehydrogenase (E3). The sequence is that of Dihydrolipoyl dehydrogenase (lpd) from Vibrio cholerae serotype O1 (strain ATCC 39315 / El Tor Inaba N16961).